The primary structure comprises 104 residues: uncharacterized protein (104 aa).

The helical transmembrane segment at 80–98 (GSSLPLFDLVFILLSTFFL) threads the bilayer.

It localises to the membrane. This is an uncharacterized protein from Saccharomyces cerevisiae (strain ATCC 204508 / S288c) (Baker's yeast).